The following is a 302-amino-acid chain: Phosphatidylglycerol--prolipoprotein diacylglyceryl transferase (302 aa).

7 consecutive transmembrane segments (helical) span residues Phe-19–Trp-39, Leu-67–Tyr-87, Ile-108–Leu-128, Leu-143–Gly-163, Gln-203–Tyr-223, Gly-232–Val-252, and Leu-264–Leu-284. Arg-156 provides a ligand contact to a 1,2-diacyl-sn-glycero-3-phospho-(1'-sn-glycerol).

Belongs to the Lgt family.

The protein localises to the cell inner membrane. It catalyses the reaction L-cysteinyl-[prolipoprotein] + a 1,2-diacyl-sn-glycero-3-phospho-(1'-sn-glycerol) = an S-1,2-diacyl-sn-glyceryl-L-cysteinyl-[prolipoprotein] + sn-glycerol 1-phosphate + H(+). The protein operates within protein modification; lipoprotein biosynthesis (diacylglyceryl transfer). In terms of biological role, catalyzes the transfer of the diacylglyceryl group from phosphatidylglycerol to the sulfhydryl group of the N-terminal cysteine of a prolipoprotein, the first step in the formation of mature lipoproteins. This chain is Phosphatidylglycerol--prolipoprotein diacylglyceryl transferase, found in Caulobacter vibrioides (strain ATCC 19089 / CIP 103742 / CB 15) (Caulobacter crescentus).